Here is a 2267-residue protein sequence, read N- to C-terminus: Acetyl-CoA carboxylase 1 (2267 aa).

The region spanning Pro38–Ala544 is the Biotin carboxylation domain. Positions Pro190–Val384 constitute an ATP-grasp domain. Residue Cys216 to Leu273 participates in ATP binding. Mg(2+)-binding residues include Glu339, Glu353, and Asn355. Glu339, Glu353, and Asn355 together coordinate Mn(2+). Residue Arg357 is part of the active site. The Biotinyl-binding domain occupies Leu671 to Asp745. Lys712 bears the N6-biotinyllysine mark. Positions Pro1502–Lys1843 constitute a CoA carboxyltransferase N-terminal domain. The segment at Pro1502–Glu2163 is carboxyltransferase. Arg1752, Lys2053, and Arg2055 together coordinate CoA. A CoA carboxyltransferase C-terminal domain is found at Pro1847–Glu2163.

As to quaternary structure, homodimer. The cofactor is Mg(2+). It depends on Mn(2+) as a cofactor. Biotin serves as cofactor.

The protein localises to the cytoplasm. The protein resides in the cytosol. It carries out the reaction hydrogencarbonate + acetyl-CoA + ATP = malonyl-CoA + ADP + phosphate + H(+). It catalyses the reaction N(6)-biotinyl-L-lysyl-[protein] + hydrogencarbonate + ATP = N(6)-carboxybiotinyl-L-lysyl-[protein] + ADP + phosphate + H(+). The protein operates within lipid metabolism; malonyl-CoA biosynthesis; malonyl-CoA from acetyl-CoA: step 1/1. Functionally, multifunctional enzyme that catalyzes the carboxylation of acetyl-CoA, forming malonyl-CoA, which is used in the plastid for fatty acid synthesis and in the cytosol in various biosynthetic pathways including fatty acid elongation. The sequence is that of Acetyl-CoA carboxylase 1 (ACC1) from Oryza sativa subsp. japonica (Rice).